The primary structure comprises 254 residues: Probable phosphatase Shew185_1467 (254 aa).

Histidine 8, histidine 10, histidine 16, histidine 41, glutamate 74, histidine 102, histidine 132, aspartate 193, and histidine 195 together coordinate Zn(2+).

This sequence belongs to the PHP family. Zn(2+) is required as a cofactor.

This is Probable phosphatase Shew185_1467 from Shewanella baltica (strain OS185).